A 98-amino-acid chain; its full sequence is Cobalt transport protein CbiN (98 aa).

The next 2 membrane-spanning stretches (helical) occupy residues 6–26 and 68–88; these read VLMI…YSGL and SLLF…FFGY.

The protein belongs to the CbiN family. In terms of assembly, forms an energy-coupling factor (ECF) transporter complex composed of an ATP-binding protein (A component, CbiO), a transmembrane protein (T component, CbiQ) and 2 possible substrate-capture proteins (S components, CbiM and CbiN) of unknown stoichimetry.

Its subcellular location is the cell membrane. It participates in cofactor biosynthesis; adenosylcobalamin biosynthesis. Part of the energy-coupling factor (ECF) transporter complex CbiMNOQ involved in cobalt import. This Methanococcus maripaludis (strain DSM 14266 / JCM 13030 / NBRC 101832 / S2 / LL) protein is Cobalt transport protein CbiN.